A 198-amino-acid polypeptide reads, in one-letter code: RNA pyrophosphohydrolase (198 aa).

A Nudix hydrolase domain is found at 6 to 149; sequence GYRPNVGIVI…KKEVYRKAMK (144 aa). Positions 38-59 match the Nudix box motif; that stretch reads GGINDNESAEQAMYRELFEEVG.

Belongs to the Nudix hydrolase family. RppH subfamily. It depends on a divalent metal cation as a cofactor.

Functionally, accelerates the degradation of transcripts by removing pyrophosphate from the 5'-end of triphosphorylated RNA, leading to a more labile monophosphorylated state that can stimulate subsequent ribonuclease cleavage. In Pasteurella multocida (strain Pm70), this protein is RNA pyrophosphohydrolase.